We begin with the raw amino-acid sequence, 298 residues long: Bifunctional protein FolD (298 aa).

NADP(+)-binding positions include 165 to 167, serine 190, and isoleucine 231; that span reads GRS.

The protein belongs to the tetrahydrofolate dehydrogenase/cyclohydrolase family. In terms of assembly, homodimer.

It catalyses the reaction (6R)-5,10-methylene-5,6,7,8-tetrahydrofolate + NADP(+) = (6R)-5,10-methenyltetrahydrofolate + NADPH. The enzyme catalyses (6R)-5,10-methenyltetrahydrofolate + H2O = (6R)-10-formyltetrahydrofolate + H(+). It functions in the pathway one-carbon metabolism; tetrahydrofolate interconversion. Functionally, catalyzes the oxidation of 5,10-methylenetetrahydrofolate to 5,10-methenyltetrahydrofolate and then the hydrolysis of 5,10-methenyltetrahydrofolate to 10-formyltetrahydrofolate. The chain is Bifunctional protein FolD from Prochlorococcus marinus (strain AS9601).